Consider the following 545-residue polypeptide: Esterase-5C (545 aa).

Residues 1 to 19 (MLAARLIILLSFYWLSASA) form the signal peptide. An intrachain disulfide couples Cys84 to Cys103. The N-linked (GlcNAc...) asparagine glycan is linked to Asn113. Ser207 serves as the catalytic Acyl-ester intermediate. A disulfide bond links Cys259 and Cys271. Asn421 carries an N-linked (GlcNAc...) asparagine glycan. His467 serves as the catalytic Charge relay system. Asn507 carries an N-linked (GlcNAc...) asparagine glycan. Residues Cys515 and Cys536 are joined by a disulfide bond.

The protein belongs to the type-B carboxylesterase/lipase family.

The protein localises to the secreted. It carries out the reaction a carboxylic ester + H2O = an alcohol + a carboxylate + H(+). In Drosophila pseudoobscura pseudoobscura (Fruit fly), this protein is Esterase-5C (Est-5C).